The following is a 921-amino-acid chain: GPI ethanolamine phosphate transferase 1 (921 aa).

The Cytoplasmic segment spans residues 1-9 (MKNNTRFTL). The chain crosses the membrane as a helical span at residues 10 to 30 (IVVGVLFHLLYLWSIFDIYFI). Topologically, residues 31–457 (SPLVHGMEQK…TTYNWRFIRT (427 aa)) are lumenal. N-linked (GlcNAc...) asparagine glycans are attached at residues N90, N138, N198, N262, and N286. The helical transmembrane segment at 458–478 (IVTFGFLGWICYSFMIFLKLF) threads the bilayer. Residues 479-488 (ILNNSQTTHP) are Cytoplasmic-facing. Residues 489-509 (SILNISIFTSLGLILNYILFY) traverse the membrane as a helical segment. Over 510 to 516 (QKSPLNF) the chain is Lumenal. Residues 517-537 (YLYLIFPLFFWSKIFSNTAII) traverse the membrane as a helical segment. Residues 538–552 (RDGVNEFFKGISKAE) lie on the Cytoplasmic side of the membrane. A helical membrane pass occupies residues 553 to 573 (SVIIGLTIISIYEGIVYGFFH). Residues 574-575 (RW) are Lumenal-facing. A helical membrane pass occupies residues 576–596 (ILSLILVSFAFYPLVCGVTDL). Residues 597 to 599 (FTN) are Cytoplasmic-facing. A helical transmembrane segment spans residues 600-620 (LLWILTSVGLSSFTLLDAVKI). A topological domain (lumenal) is located at residue E621. Residues 622 to 642 (NLQQIQVAGILIVLSSAYAVM) traverse the membrane as a helical segment. Over 643-654 (RLSQDISKYTQH) the chain is Cytoplasmic. A helical transmembrane segment spans residues 655–675 (LLSIQIFLVSGMLHFTSKSVI). Residues 676–684 (SLQKREGLP) are Lumenal-facing. A helical transmembrane segment spans residues 685 to 705 (AFAQVGGWAILVISLTIMPFL). The Cytoplasmic portion of the chain corresponds to 706–728 (HYLKPNNNYQVRLLTIYLTFAPS). A helical membrane pass occupies residues 729–749 (FIILSISFEALFYFIFTAYIV). The Lumenal portion of the chain corresponds to 750 to 777 (QWLQIEKNIKVLKDEQKSDSNGIQLLRV). A helical transmembrane segment spans residues 778–798 (AIIGFFLQQIAFFGTGNVASI). Topologically, residues 799-819 (SSFSLDSVYRLLPVFDPFPMG) are cytoplasmic. The chain crosses the membrane as a helical span at residues 820-840 (ALLMLKLIIPYVLLSCGLGIM). Residues 841 to 849 (NIQLDIKDY) lie on the Lumenal side of the membrane. The chain crosses the membrane as a helical span at residues 850-870 (TISSLIISTSDILSLNFFYLL). At 871–878 (KTEGSWLD) the chain is on the cytoplasmic side. A helical transmembrane segment spans residues 879–899 (IGVTISNYCLAILSSLFMLIL). Topologically, residues 900 to 921 (EIVGHQLLKNVTRATSSQKKTN) are lumenal. Residue N909 is glycosylated (N-linked (GlcNAc...) asparagine).

Belongs to the PIGG/PIGN/PIGO family. PIGN subfamily.

It is found in the endoplasmic reticulum membrane. It participates in glycolipid biosynthesis; glycosylphosphatidylinositol-anchor biosynthesis. Ethanolamine phosphate transferase involved in glycosylphosphatidylinositol-anchor biosynthesis. Transfers ethanolamine phosphate to the first alpha-1,4-linked mannose of the glycosylphosphatidylinositol precursor of GPI-anchor. In Candida glabrata (strain ATCC 2001 / BCRC 20586 / JCM 3761 / NBRC 0622 / NRRL Y-65 / CBS 138) (Yeast), this protein is GPI ethanolamine phosphate transferase 1 (MCD4).